The chain runs to 484 residues: Folate synthesis bifunctional protein (484 aa).

The tract at residues 15–141 is HPPK; sequence VIALGSNVGN…PFVLAPLVDL (127 aa). One can recognise a Pterin-binding domain in the interval 202–470; it reads TYVMGILNLT…NVRDNVDAAR (269 aa). The interval 204-484 is DHPS; it reads VMGILNLTPD…MMTKRFKNVD (281 aa). Asparagine 209 provides a ligand contact to Mg(2+). Residues threonine 249, aspartate 286, asparagine 305, aspartate 378, lysine 423, and 458–460 contribute to the (7,8-dihydropterin-6-yl)methyl diphosphate site; that span reads RVH.

In the N-terminal section; belongs to the HPPK family. It in the C-terminal section; belongs to the DHPS family. Mg(2+) serves as cofactor. As to expression, expressed exclusively in reproductive tissues.

The protein resides in the cytoplasm. The protein localises to the cytosol. The enzyme catalyses 6-hydroxymethyl-7,8-dihydropterin + ATP = (7,8-dihydropterin-6-yl)methyl diphosphate + AMP + H(+). The catalysed reaction is (7,8-dihydropterin-6-yl)methyl diphosphate + 4-aminobenzoate = 7,8-dihydropteroate + diphosphate. It functions in the pathway cofactor biosynthesis; tetrahydrofolate biosynthesis; 2-amino-4-hydroxy-6-hydroxymethyl-7,8-dihydropteridine diphosphate from 7,8-dihydroneopterin triphosphate: step 4/4. Its pathway is cofactor biosynthesis; tetrahydrofolate biosynthesis; 7,8-dihydrofolate from 2-amino-4-hydroxy-6-hydroxymethyl-7,8-dihydropteridine diphosphate and 4-aminobenzoate: step 1/2. Its activity is regulated as follows. Inhibited by sulfanilamide. In terms of biological role, catalyzes the first two consecutive steps of tetrahydrofolate biosynthesis. Plays a role in seed stress response and survival. This chain is Folate synthesis bifunctional protein, found in Arabidopsis thaliana (Mouse-ear cress).